The primary structure comprises 1207 residues: DNA-directed RNA polymerase, mitochondrial (1207 aa).

A mitochondrion-targeting transit peptide spans 1–41; that stretch reads MSALRWTRSAAGLGRVLRSPGPHRPPSEEGTFGGFCSSRRS. Disordered regions lie at residues 1–48 and 82–103; these read MSAL…SPRE and KKVQ…KLEA. 2 PPR repeats span residues 232–266 and 267–302; these read TLHM…GLSP and DLCS…GFQP. The segment at 702–724 is disordered; sequence VPPPRSEAPRPARYQLPPGSTPV. The tract at residues 773-1207 is mediates interaction with TEFM; that stretch reads FRGRTYPCPP…QVIRSTYFFS (435 aa). Active-site residues include aspartate 893, lysine 962, and aspartate 1121.

It belongs to the phage and mitochondrial RNA polymerase family. As to quaternary structure, homodimer. Component of the mitochondrial transcription initiation complex, composed at least of TFB2M, TFAM and POLRMT. In this complex TFAM recruits POLRMT to the promoter whereas TFB2M induces structural changes in POLRMT to enable promoter opening and trapping of the DNA non-template strand. Upon metabolic stress, forms a complex composed of FOXO3, SIRT3 and mitochondrial RNA polymerase POLRMT; the complex is recruited to mtDNA in a SIRT3-dependent manner. Also forms a complex composed of FOXO3, SIRT3, TFAM and POLRMT. Interacts with TFB1M and TFB2M, leading to the stimulation of transcription. Interacts with TEFM. Interacts with MTRES1.

Its subcellular location is the mitochondrion. It catalyses the reaction RNA(n) + a ribonucleoside 5'-triphosphate = RNA(n+1) + diphosphate. Functionally, DNA-dependent RNA polymerase catalyzes the transcription of mitochondrial DNA into RNA using the four ribonucleoside triphosphates as substrates. Component of the mitochondrial transcription initiation complex, composed at least of TFB2M, TFAM and POLRMT that is required for basal transcription of mitochondrial DNA. In this complex, TFAM recruits POLRMT to a specific promoter whereas TFB2M induces structural changes in POLRMT to enable promoter opening and trapping of the DNA non-template strand. Has DNA primase activity. Catalyzes the synthesis of short RNA primers that are necessary for the initiation of lagging-strand DNA synthesis from the origin of light-strand DNA replication (OriL). The sequence is that of DNA-directed RNA polymerase, mitochondrial from Mus musculus (Mouse).